The sequence spans 478 residues: 7-dehydrocholesterol reductase (478 aa).

The interval 1 to 28 (MMASDRVRKRHKGSANGAQTVEKEPSKE) is disordered. The next 6 membrane-spanning stretches (helical) occupy residues 43-63 (LSGV…FIMA), 97-117 (WAAA…YMCV), 180-200 (WIPL…FAFI), 269-289 (VTNS…DFFW), 309-329 (LGWG…LYLV), and 333-353 (IQLS…GYYI). NADP(+)-binding positions include Lys-361, Arg-365, Met-398, Trp-403, and 410 to 411 (NY). A helical membrane pass occupies residues 424–444 (ACGGNHLLPYFYIIYMTILLV). NADP(+)-binding positions include Asp-450, 454-458 (CSNKY), and Tyr-465.

This sequence belongs to the ERG4/ERG24 family.

The protein resides in the endoplasmic reticulum membrane. It carries out the reaction cholesterol + NADP(+) = 7-dehydrocholesterol + NADPH + H(+). The catalysed reaction is 7-dehydrodesmosterol + NADPH + H(+) = desmosterol + NADP(+). The protein operates within steroid biosynthesis; cholesterol biosynthesis. Catalyzes the last step of the cholesterol synthesis pathway, which transforms cholesta-5,7-dien-3beta-ol (7-dehydrocholesterol,7-DHC) into cholesterol by reducing the C7-C8 double bond of its sterol core. Can also metabolize cholesta-5,7,24-trien-3beta-ol (7-dehydrodemosterol, 7-DHD) to desmosterol, which is then metabolized by the Delta(24)-sterol reductase (DHCR24) to cholesterol. Modulates ferroptosis (a form of regulated cell death driven by iron-dependent lipid peroxidation) through the metabolic breakdown of the anti-ferroptotic metabolites 7-DHC and 7-DHD which, when accumulated, divert the propagation of peroxyl radical-mediated damage from phospholipid components to its sterol core, protecting plasma and mitochondrial membranes from phospholipid autoxidation. In Danio rerio (Zebrafish), this protein is 7-dehydrocholesterol reductase (dhcr7).